A 156-amino-acid polypeptide reads, in one-letter code: Small ribosomal subunit protein uS7 (156 aa).

This sequence belongs to the universal ribosomal protein uS7 family. Part of the 30S ribosomal subunit. Contacts proteins S9 and S11.

Its function is as follows. One of the primary rRNA binding proteins, it binds directly to 16S rRNA where it nucleates assembly of the head domain of the 30S subunit. Is located at the subunit interface close to the decoding center, probably blocks exit of the E-site tRNA. The sequence is that of Small ribosomal subunit protein uS7 from Streptococcus pyogenes serotype M3 (strain ATCC BAA-595 / MGAS315).